A 273-amino-acid polypeptide reads, in one-letter code: 4-hydroxy-tetrahydrodipicolinate reductase (273 aa).

NAD(+) contacts are provided by residues 11–16 (GAGGRM) and Glu-36. An NADP(+)-binding site is contributed by Arg-37. Residues 100–102 (GTT) and 124–127 (AANY) each bind NAD(+). The active-site Proton donor/acceptor is His-157. His-158 contributes to the (S)-2,3,4,5-tetrahydrodipicolinate binding site. Catalysis depends on Lys-161, which acts as the Proton donor. Residue 167–168 (GT) participates in (S)-2,3,4,5-tetrahydrodipicolinate binding.

It belongs to the DapB family.

Its subcellular location is the cytoplasm. The enzyme catalyses (S)-2,3,4,5-tetrahydrodipicolinate + NAD(+) + H2O = (2S,4S)-4-hydroxy-2,3,4,5-tetrahydrodipicolinate + NADH + H(+). It catalyses the reaction (S)-2,3,4,5-tetrahydrodipicolinate + NADP(+) + H2O = (2S,4S)-4-hydroxy-2,3,4,5-tetrahydrodipicolinate + NADPH + H(+). Its pathway is amino-acid biosynthesis; L-lysine biosynthesis via DAP pathway; (S)-tetrahydrodipicolinate from L-aspartate: step 4/4. Its function is as follows. Catalyzes the conversion of 4-hydroxy-tetrahydrodipicolinate (HTPA) to tetrahydrodipicolinate. In Acinetobacter baumannii (strain ACICU), this protein is 4-hydroxy-tetrahydrodipicolinate reductase.